Consider the following 299-residue polypeptide: Peroxisomal biogenesis factor 19 (299 aa).

The disordered stretch occupies residues 1-63 (MAAAEEGCSV…SPGDTAKDAL (63 aa)). Ala-2 bears the N-acetylalanine mark. The tract at residues 2–56 (AAAEEGCSVGAEADRELEELLESALDDFDKAKPSPAPPSTTTAPDASGPQKRSPG) is docking to the peroxisome membrane and binding to PEX3. A necessary for PEX19 function on peroxisome biogenesis region spans residues 2-91 (AAAEEGCSVG…QATAEFEKAM (90 aa)). Acidic residues predominate over residues 16 to 27 (RELEELLESALD). Phosphoserine is present on residues Ser-35, Ser-54, and Ser-66. At Thr-236 the chain carries Phosphothreonine. Cysteine methyl ester is present on Cys-296. Residue Cys-296 is the site of S-farnesyl cysteine attachment. A propeptide spans 297-299 (LIM) (removed in mature form).

Belongs to the peroxin-19 family. In terms of assembly, interacts with a broad range of peroxisomal membrane proteins, including PEX3, PEX10, PEX11A, PEX11B, PEX12, PEX13, PEX14 and PEX16, PXMP2/PMP22, PXMP4/PMP24, SLC25A17/PMP34, ABCD1/ALDP, ABCD2/ALDRP, and ABCD3/PMP70. Also interacts with the tumor suppressor CDKN2A/p19ARF. As to quaternary structure, (Microbial infection) Interacts with human cytomegalovirus protein UL37 isoform vMIA; this interaction inhibits the peroxisomal-dependent antiviral signaling. In terms of tissue distribution, ubiquitously expressed. Isoform 1 is strongly predominant in all tissues except in utero where isoform 2 is the main form.

Its subcellular location is the cytoplasm. The protein localises to the peroxisome membrane. Functionally, necessary for early peroxisomal biogenesis. Acts both as a cytosolic chaperone and as an import receptor for peroxisomal membrane proteins (PMPs). Binds and stabilizes newly synthesized PMPs in the cytoplasm by interacting with their hydrophobic membrane-spanning domains, and targets them to the peroxisome membrane by binding to the integral membrane protein PEX3. Excludes CDKN2A from the nucleus and prevents its interaction with MDM2, which results in active degradation of TP53. This chain is Peroxisomal biogenesis factor 19, found in Homo sapiens (Human).